The chain runs to 92 residues: Large ribosomal subunit protein bL34m (92 aa).

Residues 1–46 (MALLAGSLLGPTSRSAALLGGRWLQPRAWLGFPDAWGLPTPQQARG) constitute a mitochondrion transit peptide. Residues 40 to 57 (TPQQARGKSRGNEYQPSN) are compositionally biased toward polar residues. The tract at residues 40–63 (TPQQARGKSRGNEYQPSNIKRKNK) is disordered. Residue Ser71 is modified to Phosphoserine.

The protein belongs to the bacterial ribosomal protein bL34 family. As to quaternary structure, component of the mitochondrial ribosome large subunit (39S) which comprises a 16S rRNA and about 50 distinct proteins.

Its subcellular location is the mitochondrion. The sequence is that of Large ribosomal subunit protein bL34m (MRPL34) from Macaca fascicularis (Crab-eating macaque).